A 379-amino-acid polypeptide reads, in one-letter code: UDP-4-amino-4-deoxy-L-arabinose--oxoglutarate aminotransferase (379 aa).

An N6-(pyridoxal phosphate)lysine modification is found at Lys-182.

It belongs to the DegT/DnrJ/EryC1 family. ArnB subfamily. Homodimer. Pyridoxal 5'-phosphate is required as a cofactor.

It carries out the reaction UDP-4-amino-4-deoxy-beta-L-arabinose + 2-oxoglutarate = UDP-beta-L-threo-pentopyranos-4-ulose + L-glutamate. It functions in the pathway nucleotide-sugar biosynthesis; UDP-4-deoxy-4-formamido-beta-L-arabinose biosynthesis; UDP-4-deoxy-4-formamido-beta-L-arabinose from UDP-alpha-D-glucuronate: step 2/3. It participates in bacterial outer membrane biogenesis; lipopolysaccharide biosynthesis. Its function is as follows. Catalyzes the conversion of UDP-4-keto-arabinose (UDP-Ara4O) to UDP-4-amino-4-deoxy-L-arabinose (UDP-L-Ara4N). The modified arabinose is attached to lipid A and is required for resistance to polymyxin and cationic antimicrobial peptides. The polypeptide is UDP-4-amino-4-deoxy-L-arabinose--oxoglutarate aminotransferase (Escherichia coli O8 (strain IAI1)).